We begin with the raw amino-acid sequence, 238 residues long: Uridylate kinase (238 aa).

12–15 contacts ATP; the sequence is KLSG. Glycine 54 contributes to the UMP binding site. ATP contacts are provided by glycine 55 and arginine 59. UMP contacts are provided by residues aspartate 74 and 135–142; that span reads TGNPFFTT. Positions 162, 168, and 171 each coordinate ATP.

This sequence belongs to the UMP kinase family. As to quaternary structure, homohexamer.

It localises to the cytoplasm. It catalyses the reaction UMP + ATP = UDP + ADP. It participates in pyrimidine metabolism; CTP biosynthesis via de novo pathway; UDP from UMP (UMPK route): step 1/1. Its activity is regulated as follows. Inhibited by UTP. Catalyzes the reversible phosphorylation of UMP to UDP. In Bordetella parapertussis (strain 12822 / ATCC BAA-587 / NCTC 13253), this protein is Uridylate kinase.